The sequence spans 362 residues: Phosphoserine aminotransferase (362 aa).

L-glutamate contacts are provided by Ser-9 and Arg-42. Pyridoxal 5'-phosphate-binding positions include 76–77 (GR), Trp-102, Thr-153, Asp-174, and Gln-197. An N6-(pyridoxal phosphate)lysine modification is found at Lys-198. 239–240 (NT) contacts pyridoxal 5'-phosphate.

The protein belongs to the class-V pyridoxal-phosphate-dependent aminotransferase family. SerC subfamily. As to quaternary structure, homodimer. Requires pyridoxal 5'-phosphate as cofactor.

It localises to the cytoplasm. The catalysed reaction is O-phospho-L-serine + 2-oxoglutarate = 3-phosphooxypyruvate + L-glutamate. It catalyses the reaction 4-(phosphooxy)-L-threonine + 2-oxoglutarate = (R)-3-hydroxy-2-oxo-4-phosphooxybutanoate + L-glutamate. Its pathway is amino-acid biosynthesis; L-serine biosynthesis; L-serine from 3-phospho-D-glycerate: step 2/3. It participates in cofactor biosynthesis; pyridoxine 5'-phosphate biosynthesis; pyridoxine 5'-phosphate from D-erythrose 4-phosphate: step 3/5. In terms of biological role, catalyzes the reversible conversion of 3-phosphohydroxypyruvate to phosphoserine and of 3-hydroxy-2-oxo-4-phosphonooxybutanoate to phosphohydroxythreonine. This is Phosphoserine aminotransferase from Salmonella newport (strain SL254).